Reading from the N-terminus, the 228-residue chain is Lipoprotein-releasing system ATP-binding protein LolD (228 aa).

The ABC transporter domain maps to 7-228 (LNCQNLTKDY…MQDGVLRPEM (222 aa)). 43 to 50 (GSSGSGKS) is a binding site for ATP.

Belongs to the ABC transporter superfamily. Lipoprotein translocase (TC 3.A.1.125) family. As to quaternary structure, the complex is composed of two ATP-binding proteins (LolD) and two transmembrane proteins (LolC and LolE).

It localises to the cell inner membrane. Its function is as follows. Part of the ABC transporter complex LolCDE involved in the translocation of mature outer membrane-directed lipoproteins, from the inner membrane to the periplasmic chaperone, LolA. Responsible for the formation of the LolA-lipoprotein complex in an ATP-dependent manner. The protein is Lipoprotein-releasing system ATP-binding protein LolD of Mannheimia succiniciproducens (strain KCTC 0769BP / MBEL55E).